A 144-amino-acid chain; its full sequence is Bacilliredoxin BrxA (144 aa).

Residues cysteine 53 and cysteine 55 each act as nucleophile in the active site. Cysteine 53 is subject to S-bacillithiol cysteine disulfide. The CXC active site motif motif lies at 53–55 (CGC). An intrachain disulfide couples cysteine 53 to cysteine 55.

This sequence belongs to the bacilliredoxin family. N-terminal Cys of the CXC active site motif can react with bacillithiol (BSH) to form mixed disulfides. S-bacillithiolation protects Cys residues against overoxidation by acting as a redox switch in response to oxidative stress.

Functionally, S-bacillithiolation is the formation of mixed disulfide bonds between protein thiols and the general thiol reductant bacillithiol (BSH) under oxidative stress. BSH is an equivalent of glutathione (GSH) in Firmicutes. This protein is a dithiol bacilliredoxin, which debacillithiolates (removes BSH) the S-bacillithiolated OhrR (OhrR-SSB) in vitro and in vivo NaOCl-generated S-bacillithiolated MetE (MetE-SSB). Involved in maintaining redox homeostasis in response to disulfide stress conditions. Has a redox potential of -130 mV. Displays weak protein disulfide isomerase activity in vitro. This chain is Bacilliredoxin BrxA, found in Bacillus subtilis (strain 168).